Here is a 949-residue protein sequence, read N- to C-terminus: MCNHHPQHSHDNDTIRIRGARTHNLKNIDLDIPRHKLVVVTGLSGSGKSSLAFDTLYAEGQRRYVESLSAYARQFLQMMDKPDVDLIEGLSPAISIEQKSTSHNPRSTVGTVTEIHDYLRLLYARVGTPYCPEHKLPLSSQTVSQMVDAVLKLPEDTRVMILAPTVRERKGEFVDFFADLQAQGFARVRVDGEVYQLDEVPKLEKNIKHNIDVVIDRVKVKADIKQRLAESFETALRHGNERALAMEMDSGEEHWFSARFACPVCSYSLPELEPRLFSFNNPMGSCPTCDGLGNTNFFDPEKVVAHPELSLATGAIDGWDKRNQFYFQMIQSLARHYGFDVQAAWETLPEKVKKVVLHGSGKEVIDFTYLSERGTTFNRSHAFEGIIPNLERRYRETDSETVREKLREYQNHRACPSCGGARLRKEARYVYVSGEPLHEVSAWPLTKTHQFFETLDLDGNKKQIAEKILKEITERLGFLINVGLDYLNLSRSAETLSGGEAQRIRLASQIGSGLTGVMYVLDEPSIGLHQRDNDRLLATLKRLRDLGNSVIVVEHDEDAIREADFVVDMGPGAGEHGGNVLIADTPENVAQCENSVTGQYLSGKKSIAVPSERTPVNPDRMLVLKGARGNNLKNVTLELPLGLITCITGVSGSGKSTLINDTLAKITARELNRAQEEPAPFDDIHGLEHLDKVINVDQSPIGRTPRSNPATYTGLFTPIRELFAGVPLSRERGYNVGRFSFNVKGGRCEACQGDGVIKVEMHFLPDVYVPCEVCHGKRYNRETLEIQYKGKNISQVLDMTVEEAREFFDAVPTVSRKLQTLMDVGLGYIRLGQSATTLSGGEAQRVKLALELSKRDTGRTLYILDEPTTGLHFADIALLLEVIGRLKGKGNSIVIIEHNLDVIKTADWIVDLGPEGGDGGGRIIAKGSPEQVAKVKGSYTGKYLKVVLR.

42–49 (GLSGSGKS) contributes to the ATP binding site. The C4-type zinc-finger motif lies at 262–289 (CPVCSYSLPELEPRLFSFNNPMGSCPTC). ABC transporter domains lie at 319–596 (WDKR…ENSV) and 616–945 (VNPD…KYLK). Residue 649-656 (GVSGSGKS) participates in ATP binding. Residues 748 to 774 (CEACQGDGVIKVEMHFLPDVYVPCEVC) form a C4-type zinc finger.

Belongs to the ABC transporter superfamily. UvrA family. Forms a heterotetramer with UvrB during the search for lesions.

The protein localises to the cytoplasm. Its function is as follows. The UvrABC repair system catalyzes the recognition and processing of DNA lesions. UvrA is an ATPase and a DNA-binding protein. A damage recognition complex composed of 2 UvrA and 2 UvrB subunits scans DNA for abnormalities. When the presence of a lesion has been verified by UvrB, the UvrA molecules dissociate. The polypeptide is UvrABC system protein A (Neisseria meningitidis serogroup B (strain ATCC BAA-335 / MC58)).